A 155-amino-acid chain; its full sequence is Telokin-like protein 20 homolog (155 aa).

Residues 109–155 form a disordered region; the sequence is KRAVAPPHHEPEPVPAEEGAVADRAEPESGDAPPSPKKQKLDEREQD.

In Orgyia pseudotsugata multicapsid polyhedrosis virus (OpMNPV), this protein is Telokin-like protein 20 homolog.